A 230-amino-acid chain; its full sequence is Type II restriction enzyme NlaIII (230 aa).

The catalysed reaction is Endonucleolytic cleavage of DNA to give specific double-stranded fragments with terminal 5'-phosphates.. A P subtype restriction enzyme that recognizes the double-stranded sequence 5'-CATG-3' and cleaves after G-4. In Neisseria lactamica, this protein is Type II restriction enzyme NlaIII (nlaIIIR).